The chain runs to 444 residues: Adenylosuccinate synthetase (444 aa).

GTP is bound by residues glycine 19–lysine 25 and glycine 47–threonine 49. The active-site Proton acceptor is aspartate 20. Residues aspartate 20 and glycine 47 each coordinate Mg(2+). IMP-binding positions include aspartate 20–lysine 23, asparagine 45–histidine 48, threonine 139, arginine 153, glutamine 234, threonine 249, and arginine 317. Catalysis depends on histidine 48, which acts as the Proton donor. Threonine 313–arginine 319 contacts substrate. GTP-binding positions include arginine 319, lysine 345–aspartate 347, and serine 427–glycine 429.

This sequence belongs to the adenylosuccinate synthetase family. As to quaternary structure, homodimer. Mg(2+) serves as cofactor.

The protein resides in the cytoplasm. The catalysed reaction is IMP + L-aspartate + GTP = N(6)-(1,2-dicarboxyethyl)-AMP + GDP + phosphate + 2 H(+). The protein operates within purine metabolism; AMP biosynthesis via de novo pathway; AMP from IMP: step 1/2. In terms of biological role, plays an important role in the de novo pathway of purine nucleotide biosynthesis. Catalyzes the first committed step in the biosynthesis of AMP from IMP. The polypeptide is Adenylosuccinate synthetase (Methylibium petroleiphilum (strain ATCC BAA-1232 / LMG 22953 / PM1)).